Here is a 202-residue protein sequence, read N- to C-terminus: uncharacterized protein (202 aa).

This sequence belongs to the NAD(P)H dehydrogenase (quinone) family.

This is an uncharacterized protein from Haemophilus influenzae (strain ATCC 51907 / DSM 11121 / KW20 / Rd).